Here is a 498-residue protein sequence, read N- to C-terminus: Actin-binding protein WASF2 (498 aa).

2 disordered regions span residues 173-203 (KEKR…KEEW) and 240-435 (NVDA…AVSD). Residues 252–263 (SDSASSPSPSFS) are compositionally biased toward low complexity. Pro residues predominate over residues 298 to 407 (SHPPPAPPLG…PPPGPPPPPF (110 aa)). The WH2 domain occupies 436 to 453 (ARSDLLSAIRQGFQLRRV). S474 carries the phosphoserine modification.

Belongs to the SCAR/WAVE family. As to quaternary structure, binds actin and the Arp2/3 complex. Interacts with BAIAP2. Component of the WAVE2 complex composed of ABI1, CYFIP1/SRA1, NCKAP1/NAP1 (NCKAP1l/HEM1 in hematopoietic cells) and WASF2/WAVE2. Directly interacts with BRK1. Interacts with FNBP1L (via the SH3 domain). In terms of assembly, (Microbial infection) Interacts with human cytomegalovirus protein UL135. Expressed in all tissues with strongest expression in placenta, lung, and peripheral blood leukocytes, but not in skeletal muscle.

It is found in the cytoplasm. The protein resides in the cytoskeleton. Its subcellular location is the cell projection. The protein localises to the lamellipodium. It localises to the basolateral cell membrane. Downstream effector molecule involved in the transmission of signals from tyrosine kinase receptors and small GTPases to the actin cytoskeleton. Promotes formation of actin filaments. Part of the WAVE complex that regulates lamellipodia formation. The WAVE complex regulates actin filament reorganization via its interaction with the Arp2/3 complex. In Homo sapiens (Human), this protein is Actin-binding protein WASF2.